Reading from the N-terminus, the 185-residue chain is Ribosome-recycling factor (185 aa).

Belongs to the RRF family.

The protein resides in the cytoplasm. In terms of biological role, responsible for the release of ribosomes from messenger RNA at the termination of protein biosynthesis. May increase the efficiency of translation by recycling ribosomes from one round of translation to another. This chain is Ribosome-recycling factor, found in Streptococcus thermophilus (strain CNRZ 1066).